Consider the following 834-residue polypeptide: Arf-GAP with coiled-coil, ANK repeat and PH domain-containing protein 3 (834 aa).

The PH domain maps to 268–363; the sequence is GVVMEGYLFK…WVQAVQASIA (96 aa). The interval 375–400 is disordered; that stretch reads SERLDRTASPSTSSIDSATDTRERGV. Residues 382–392 are compositionally biased toward polar residues; it reads ASPSTSSIDSA. Positions 403–525 constitute an Arf-GAP domain; it reads ESVLQRVQSV…KFLRKAPMAP (123 aa). The segment at 418 to 441 adopts a C4-type zinc-finger fold; it reads CGDCGQPDPRWASINLGVLLCIEC. Positions 633–653 are disordered; that stretch reads SVTEEEGAESEESSGEADGDT. Acidic residues predominate over residues 634–653; that stretch reads VTEEEGAESEESSGEADGDT. 3 ANK repeats span residues 702 to 731, 735 to 764, and 768 to 797; these read EGKTPLVQAVLGGSLIVCEFLLQNGADVNQ, RGRAPLHHATLLGRTGQVCLFLKRGADQHA, and EQRDPLAIAVQAANADIVTLLRLARMAEEM.

Functionally, GTPase-activating protein for the ADP ribosylation factor family. In Homo sapiens (Human), this protein is Arf-GAP with coiled-coil, ANK repeat and PH domain-containing protein 3 (ACAP3).